Reading from the N-terminus, the 697-residue chain is tRNA 5-methylaminomethyl-2-thiouridine biosynthesis bifunctional protein MnmC (697 aa).

A tRNA (mnm(5)s(2)U34)-methyltransferase region spans residues 1-272 (MPKPASMAMN…KREMLTAVMS (272 aa)). Positions 300 to 697 (IGAGVAGLLT…HKHKTRQAVI (398 aa)) are FAD-dependent cmnm(5)s(2)U34 oxidoreductase.

It in the N-terminal section; belongs to the methyltransferase superfamily. tRNA (mnm(5)s(2)U34)-methyltransferase family. This sequence in the C-terminal section; belongs to the DAO family. Requires FAD as cofactor.

The protein resides in the cytoplasm. The catalysed reaction is 5-aminomethyl-2-thiouridine(34) in tRNA + S-adenosyl-L-methionine = 5-methylaminomethyl-2-thiouridine(34) in tRNA + S-adenosyl-L-homocysteine + H(+). Its function is as follows. Catalyzes the last two steps in the biosynthesis of 5-methylaminomethyl-2-thiouridine (mnm(5)s(2)U) at the wobble position (U34) in tRNA. Catalyzes the FAD-dependent demodification of cmnm(5)s(2)U34 to nm(5)s(2)U34, followed by the transfer of a methyl group from S-adenosyl-L-methionine to nm(5)s(2)U34, to form mnm(5)s(2)U34. This Psychrobacter cryohalolentis (strain ATCC BAA-1226 / DSM 17306 / VKM B-2378 / K5) protein is tRNA 5-methylaminomethyl-2-thiouridine biosynthesis bifunctional protein MnmC.